A 396-amino-acid polypeptide reads, in one-letter code: Tyrosine--tRNA ligase (396 aa).

The 'HIGH' region signature appears at 43–52 (PTAPDIHLGH). Residues 227–231 (KMSKS) carry the 'KMSKS' region motif. Residue Lys230 participates in ATP binding. The region spanning 335-395 (IGLATLLKEA…GKRKFARVTV (61 aa)) is the S4 RNA-binding domain.

This sequence belongs to the class-I aminoacyl-tRNA synthetase family. TyrS type 2 subfamily. In terms of assembly, homodimer.

The protein localises to the cytoplasm. The enzyme catalyses tRNA(Tyr) + L-tyrosine + ATP = L-tyrosyl-tRNA(Tyr) + AMP + diphosphate + H(+). In terms of biological role, catalyzes the attachment of tyrosine to tRNA(Tyr) in a two-step reaction: tyrosine is first activated by ATP to form Tyr-AMP and then transferred to the acceptor end of tRNA(Tyr). The protein is Tyrosine--tRNA ligase of Haemophilus ducreyi (strain 35000HP / ATCC 700724).